The sequence spans 125 residues: Ribonuclease P protein component (125 aa).

Belongs to the RnpA family. In terms of assembly, consists of a catalytic RNA component (M1 or rnpB) and a protein subunit.

It catalyses the reaction Endonucleolytic cleavage of RNA, removing 5'-extranucleotides from tRNA precursor.. Functionally, RNaseP catalyzes the removal of the 5'-leader sequence from pre-tRNA to produce the mature 5'-terminus. It can also cleave other RNA substrates such as 4.5S RNA. The protein component plays an auxiliary but essential role in vivo by binding to the 5'-leader sequence and broadening the substrate specificity of the ribozyme. This chain is Ribonuclease P protein component, found in Clostridium perfringens (strain ATCC 13124 / DSM 756 / JCM 1290 / NCIMB 6125 / NCTC 8237 / Type A).